Reading from the N-terminus, the 409-residue chain is Inactive serine protease 35 (409 aa).

The first 20 residues, 1–20 (MENTLLWLVILIPGWALSDG), serve as a signal peptide directing secretion. Asn90 carries N-linked (GlcNAc...) asparagine glycosylation. The Peptidase S1 domain maps to 124–404 (VYGTDSRFSI…ICLWIHGNAA (281 aa)). An intrachain disulfide couples Cys154 to Cys170. The segment covering 188 to 207 (VLKMRNKGGRKKRRGSKRSR) has biased composition (basic residues). A disordered region spans residues 188–247 (VLKMRNKGGRKKRRGSKRSRREAESAGQSQAHLRESTTQRPGKKSRRGPRVTQGRPSFQW).

The protein belongs to the peptidase S1 family. In terms of tissue distribution, in ovary, it localizes to the theca cells of pre-antral follicles, the theca and granulosa cells of pre-ovulatory and ovulatory follicles, as well as to the developing corpus luteum.

Its subcellular location is the secreted. The polypeptide is Inactive serine protease 35 (Prss35) (Mus musculus (Mouse)).